The primary structure comprises 886 residues: 3',5'-cyclic-AMP phosphodiesterase 4A (886 aa).

The tract at residues 1–128 is disordered; the sequence is MEPPTVPSER…GRSPLDSQAS (128 aa). Ser-13 carries the post-translational modification Phosphoserine. Over residues 36-46 the composition is skewed to low complexity; that stretch reads QPRTPIRIQQR. Over residues 51–78 the composition is skewed to basic and acidic residues; sequence SAERAERERQPHRPIERADAMDTSDRPG. Over residues 93–104 the composition is skewed to gly residues; it reads TGTGSGGAGGGS. Phosphoserine occurs at positions 119 and 123. At Ser-152 the chain carries Phosphoserine; by MAPKAPK2. Residues Ser-157, Ser-165, and Ser-209 each carry the phosphoserine modification. The segment at 294–331 is disordered; the sequence is KQNEVEIPSPTMKEREKQQAPRPRPSQPPPPPVPHLQP. A compositionally biased stretch (pro residues) spans 315 to 328; it reads RPRPSQPPPPPVPH. Ser-346 is modified (phosphoserine). Residues 357–686 form the PDEase domain; it reads VKTDQEELLA…DWYYSAIRQS (330 aa). Lys-358 participates in a covalent cross-link: Glycyl lysine isopeptide (Lys-Gly) (interchain with G-Cter in SUMO). The Proton donor role is filled by His-433. A 3',5'-cyclic AMP-binding site is contributed by His-433. Positions 433 and 437 each coordinate AMP. Residues His-437, His-473, Asp-474, and Asp-591 each contribute to the Zn(2+) site. Asp-474, Asp-591, Gln-642, and Phe-645 together coordinate AMP. Asp-474 provides a ligand contact to Mg(2+). Residue Asp-474 participates in Mn(2+) binding. Residues Gln-642 and Phe-645 each contribute to the 3',5'-cyclic AMP site. Disordered stretches follow at residues 682-705 and 866-886; these read AIRQ…PLPD and FGED…GDPT. Phosphoserine is present on residues Ser-686 and Ser-688. The span at 876–886 shows a compositional bias: gly residues; it reads PGGGGSGGDPT.

The protein belongs to the cyclic nucleotide phosphodiesterase family. PDE4 subfamily. In terms of assembly, interacts with LYN (via SH3 domain). Interacts with ARRB2. It depends on Zn(2+) as a cofactor. Mg(2+) serves as cofactor. Mn(2+) is required as a cofactor. In terms of processing, proteolytically cleaved by CASP3. Phosphorylated at Ser-119 by PKA. Expressed in lymphoid cell subsets including CD8-positive T cells and T-helper 2 cells. Expressed in dendritic cells. As to expression, highly expressed in liver, stomach, testis, thyroid and adrenal glands and at a lower extent in placenta, kidney, pancreas, ovary, uterus and skin. Expressed in myeloid cell subsets including dendritic cells, monocytes, macrophages, eosinophils and mast cells. Expressed in natural killer cells. Expressed in bronchial smooth muscle. In terms of tissue distribution, expressed at high levels in the heart and small intestine. It is also found in the brain, kidney, spleen, colon, salivary gland, ovary and peripheral blood lymphocytes. Expressed predominantly in skeletal muscle and brain and at lower levels in the testis. Found in specific neuronal subpopulations including cortical pyramidal neurons, horn neurons in the spinal cord and Purkinje cells in cerebellum (at protein level).

The protein resides in the cytoplasm. The protein localises to the perinuclear region. Its subcellular location is the cell projection. It localises to the ruffle membrane. It is found in the cytosol. The protein resides in the membrane. The catalysed reaction is 3',5'-cyclic AMP + H2O = AMP + H(+). It functions in the pathway purine metabolism; 3',5'-cyclic AMP degradation; AMP from 3',5'-cyclic AMP: step 1/1. With respect to regulation, inhibited by rolipram, cilomilast, Ro 20-1724, roflumilast and denbufylline. Its activity is regulated as follows. Inhibited by rolipram. Inhibited by rolipram and cilomilast. Its function is as follows. Hydrolyzes the second messenger 3',5'-cyclic AMP (cAMP), which is a key regulator of many important physiological processes. Efficiently hydrolyzes cAMP. In terms of biological role, efficiently hydrolyzes cAMP. The phosphodiesterase activity is not affected by calcium, calmodulin or cyclic GMP (cGMP) levels. Does not hydrolyze cGMP. The sequence is that of 3',5'-cyclic-AMP phosphodiesterase 4A (PDE4A) from Homo sapiens (Human).